We begin with the raw amino-acid sequence, 364 residues long: Glycerophosphodiester phosphodiesterase (364 aa).

The first 18 residues, 1-18 (MKLKTLALSLLAAGVLAG), serve as a signal peptide directing secretion. C19 is lipidated: N-palmitoyl cysteine. C19 is lipidated: S-diacylglycerol cysteine. One can recognise a GP-PDE domain in the interval 35–360 (KIIIAHRGAS…DFPDTGVEFL (326 aa)). H40 acts as the Proton acceptor in catalysis. Positions 67 and 69 each coordinate Ca(2+). H82 (proton donor) is an active-site residue. Residue E175 participates in Ca(2+) binding.

It belongs to the glycerophosphoryl diester phosphodiesterase family. Ca(2+) serves as cofactor. Contains both ester- and amide-linked fatty acids.

It localises to the cell outer membrane. It catalyses the reaction a sn-glycero-3-phosphodiester + H2O = an alcohol + sn-glycerol 3-phosphate + H(+). In terms of biological role, glycerophosphodiester phosphodiesterase hydrolyzes glycerophosphodiesters into glycerol-3-phosphate (G3P) and the corresponding alcohol. Has a specific affinity for human immunoglobulin D myeloma protein. The protein is Glycerophosphodiester phosphodiesterase (glpQ) of Haemophilus influenzae (strain ATCC 51907 / DSM 11121 / KW20 / Rd).